Consider the following 510-residue polypeptide: Probable RNA-binding protein 46 (510 aa).

Residues 23 to 42 (ENGQRKFGGPPPGWEGPPPP) form a disordered region. The segment covering 31–42 (GPPPGWEGPPPP) has biased composition (pro residues). 3 RRM domains span residues 45–123 (REVF…VSLD), 125–207 (CRLF…WAEP), and 220–292 (RVLY…LAKP).

As to expression, expressed in the testis and ovary.

The protein localises to the cytoplasm. Its function is as follows. Essential for male and female fertility, playing a crucial role in regulating germ cell development by ensuring the proper progression of meiosis prophase I. The polypeptide is Probable RNA-binding protein 46 (rbm46) (Danio rerio (Zebrafish)).